A 311-amino-acid chain; its full sequence is AT-hook motif nuclear-localized protein 27 (311 aa).

The interval 40-105 is disordered; that stretch reads HHHQHQQHQQ…KNKAKPPIIV (66 aa). A compositionally biased stretch (basic and acidic residues) spans 55–75; it reads DDSRESDHSNKDHHQQGRPDS. The segment at residues 86-98 is a DNA-binding region (a.T hook); sequence KRPRGRPPGSKNK. One can recognise a PPC domain in the interval 110–258; that stretch reads PNALRSHVLE…EEGGGGGGGG (149 aa). The tract at residues 178–183 is required for the binding to non-AHL interactors; the sequence is GRFEIL. Positions 246–311 are disordered; sequence EEEEEGGGGG…GAGTPSRPPF (66 aa). Gly residues predominate over residues 252–262; that stretch reads GGGGGGGGGGP. Over residues 263–277 the composition is skewed to low complexity; sequence PQMQQAPSASPPSGV. The span at 278 to 292 shows a compositional bias: gly residues; sequence TGQGQLGGNVGGYGF.

In terms of assembly, homodimer. Interacts with AHL12, AHL25, AHL29, TCP4, TCP13, EF114, ATAF2/NAC081, histone H2B.1, histone H3.3 and histone H4. In terms of tissue distribution, expressed in the hypocotyl and the vascular tissue of seedling.

It is found in the nucleus. Functionally, transcription factor that specifically binds AT-rich DNA sequences related to the nuclear matrix attachment regions (MARs). Negatively regulates plant innate immunity (PTI) to pathogens through the down-regulation of the PAMP-triggered FRK1 expression. Acts redundantly with AHL18, AHL22 and AHL29 in the regulation of flowering and regulation of the hypocotyl elongation. Acts as a chromatin remodeling factor that negatively regulates the leaf senescence. Acts redundantly with AHL29/SOB3 to modulate hypocotyl growth inhibition in response to light. The protein is AT-hook motif nuclear-localized protein 27 of Arabidopsis thaliana (Mouse-ear cress).